We begin with the raw amino-acid sequence, 485 residues long: Zinc finger protein 639 (485 aa).

A compositionally biased stretch (basic residues) spans 1 to 14 (MSEYPKKRKRKTLH). Disordered stretches follow at residues 1-23 (MSEY…DSSG) and 54-82 (DNKD…SRSQ). At S60 the chain carries Phosphoserine. A Glycyl lysine isopeptide (Lys-Gly) (interchain with G-Cter in SUMO2) cross-link involves residue K76. S88 bears the Phosphoserine mark. Glycyl lysine isopeptide (Lys-Gly) (interchain with G-Cter in SUMO2) cross-links involve residues K177, K181, and K226. 8 C2H2-type zinc fingers span residues 204 to 227 (YKCE…ILKH), 233 to 255 (NVCR…AKLH), 260 to 283 (YICK…ADTH), 289 to 311 (YWCE…FQEH), 374 to 397 (FVCQ…AIEH), 403 to 425 (HVCD…LNSH), 431 to 454 (YLCQ…DFKH), and 460 to 482 (HKCS…LPVH). The tract at residues 371-455 (KNFFVCQVCG…LKIHLDFKHS (85 aa)) is interaction with CTNNA2.

Belongs to the krueppel C2H2-type zinc-finger protein family. As to quaternary structure, interacts with CTNNA2.

Its subcellular location is the nucleus. In terms of biological role, binds DNA and may function as a transcriptional repressor. In Rattus norvegicus (Rat), this protein is Zinc finger protein 639 (Znf639).